Consider the following 1522-residue polypeptide: Rho guanine nucleotide exchange factor 11 (1522 aa).

Positions 1–40 (MSVRLPQSIDRLSSLSSLGDSAPERKSPSHHRQPSDASET) are disordered. Phosphoserine occurs at positions 2, 14, 16, and 35. One can recognise a PDZ domain in the interval 47–126 (CVIIQKDQHG…LTLLGSSPSS (80 aa)). Disordered stretches follow at residues 128–175 (GISG…PEVQ) and 200–231 (YGDTSQRPSEGRLSLDSQEGDSGLDSGTERFP). The span at 149–161 (PSPPPPPPLPPPQ) shows a compositional bias: pro residues. 2 positions are modified to phosphoserine: S245 and S251. T254 carries the post-translational modification Phosphothreonine. Phosphoserine occurs at positions 255 and 271. Positions 263–286 (AQHHRRQGSDAAVPSTGDQGVDQS) are disordered. Residues 306-486 (ESDIIFQDLE…NTYMSHAGIR (181 aa)) enclose the RGSL domain. A coiled-coil region spans residues 444 to 470 (LRERQVAEKQLAALGDILSKYEEDRSA). A disordered region spans residues 490-555 (ARPSNTAEKA…SSQSTFHIPL (66 aa)). Basic and acidic residues predominate over residues 521-533 (SKKEKDALEDKKR). A phosphoserine mark is found at S556, S635, and S663. The segment at 573–680 (ENNQQYDAPE…FTPKMGRRSI (108 aa)) is disordered. A compositionally biased stretch (basic and acidic residues) spans 601 to 637 (DSSRSEIRLGRSESLKGREEMKRSRKAENVPRSRSDV). Positions 651-664 (SASSSTSSLSTRSL) are enriched in low complexity. A phosphothreonine mark is found at T668 and T672. A DH domain is found at 734–923 (DRQEVINELF…REILKYVNEA (190 aa)). The region spanning 965–1079 (KMIHEGPLTW…WMELLEEAVR (115 aa)) is the PH domain. Residues 1084–1141 (HPGAAPMPVHPPPPGPREPAQQGPTPSRVELDDSDVFHGEPEPEELPGGTGSQQRVQG) form a disordered region. A compositionally biased stretch (pro residues) spans 1091 to 1100 (PVHPPPPGPR). Positions 1112–1124 (VELDDSDVFHGEP) are enriched in basic and acidic residues. S1155 is subject to Phosphoserine. Disordered stretches follow at residues 1223 to 1320 (ETQA…AGGY), 1332 to 1423 (KVVP…RDVG), and 1453 to 1522 (LGGE…SPGP). Over residues 1236 to 1245 (PTPSVISVTS) the composition is skewed to polar residues. Phosphoserine occurs at positions 1295 and 1300. Positions 1338-1353 (PESGQSEPGPPEVEGG) are enriched in low complexity. S1457 and S1458 each carry phosphoserine. Phosphothreonine occurs at positions 1462 and 1475. At S1480 the chain carries Phosphoserine. A compositionally biased stretch (acidic residues) spans 1503 to 1513 (DGSDAPLEDST).

In terms of assembly, interacts with GNA12 and GNA13 through the RGS domain. Interacts with RHOA, PLXNB1 and PLXNB2. Interacts with SLC1A6. Interacts (via DH domain) with GCSAM (via C-terminus). Found in a complex with ARHGEF11 and ARHGEF12; binding to ARHGEF11 and ARHGEF12 enhances CDC42 GEF activity of PLEKHG4B, and PLEKHG4B, in turn, inhibits ARHGEF11- and ARHGEF12-mediated RHOA activation. In terms of processing, phosphorylated by MAP kinase p38 (MAPK11, MAPK12, MAPK13 and/or MAPK14). Ubiquitinated by the BCR(KLHL20) E3 ubiquitin ligase complex when previously phosphorylated by MAP kinase p38 (MAPK11, MAPK12, MAPK13 and/or MAPK14), leading to its degradation, thereby restricting RhoA activity and facilitating growth cone spreading and neurite outgrowth. As to expression, ubiquitously expressed.

It is found in the cytoplasm. Its subcellular location is the membrane. Its function is as follows. May play a role in the regulation of RhoA GTPase by guanine nucleotide-binding alpha-12 (GNA12) and alpha-13 (GNA13). Acts as guanine nucleotide exchange factor (GEF) for RhoA GTPase and may act as GTPase-activating protein (GAP) for GNA12 and GNA13. Involved in neurotrophin-induced neurite outgrowth. This Homo sapiens (Human) protein is Rho guanine nucleotide exchange factor 11 (ARHGEF11).